Consider the following 443-residue polypeptide: Glutamyl-tRNA reductase (443 aa).

Residues 55 to 58 (TCNR), Ser113, 118 to 120 (EPQ), and Gln124 each bind substrate. Cys56 acts as the Nucleophile in catalysis. An NADP(+)-binding site is contributed by 193–198 (GAGEMI).

This sequence belongs to the glutamyl-tRNA reductase family. In terms of assembly, homodimer.

It carries out the reaction (S)-4-amino-5-oxopentanoate + tRNA(Glu) + NADP(+) = L-glutamyl-tRNA(Glu) + NADPH + H(+). It functions in the pathway porphyrin-containing compound metabolism; protoporphyrin-IX biosynthesis; 5-aminolevulinate from L-glutamyl-tRNA(Glu): step 1/2. The protein operates within porphyrin-containing compound metabolism; chlorophyll biosynthesis. Its function is as follows. Catalyzes the NADPH-dependent reduction of glutamyl-tRNA(Glu) to glutamate 1-semialdehyde (GSA). This Methylibium petroleiphilum (strain ATCC BAA-1232 / LMG 22953 / PM1) protein is Glutamyl-tRNA reductase.